The chain runs to 320 residues: MSVDTANPTSPMMETHEQIFAQDPDFWKNYRRGRPQVPYSFFQRIYNYHQGHSGRFETVHDAGAGNGVYSKELRSKFHHVIVSDVVAENVRQAEERLGTEGYSFRVGKMEELDEIPAASVDMVFVMNAMHWADDQTRAMRAIAAQLRPGGTFACAGFGPARFRDARVQDVWERISQQGGRLLLQTANQPVDTINVMVRSQDHYNVAPLDERLFRQRALRIYLNQETGGLTGLLPPERRGEVTEPDHEGPHDQITFEHDDEWRFDMDLDGFKEHFRTFPHAFRDPEAFTSLWQEIEELVRQGSRLDGAWPVTLILATRTNA.

The segment at 61 to 154 (DAGAGNGVYS…QLRPGGTFAC (94 aa)) is methyltransferase domain. Positions 231–252 (GLLPPERRGEVTEPDHEGPHDQ) are disordered. Positions 235–252 (PERRGEVTEPDHEGPHDQ) are enriched in basic and acidic residues.

Belongs to the methyltransferase superfamily.

The protein operates within secondary metabolite biosynthesis. In terms of biological role, methyltransferase; part of the gene cluster that mediates the biosynthesis of geodin, an intermediate in the biosynthesis of other natural products. The pathway begins with the synthesis of atrochrysone thioester by the polyketide synthase (PKS) gedC. The atrochrysone carboxyl ACP thioesterase gedB then breaks the thioester bond and releases the atrochrysone carboxylic acid from gedC. The atrochrysone carboxylic acid is then converted to atrochrysone which is further transformed into emodinanthrone. The next step is performed by the emodinanthrone oxygenase gedH that catalyzes the oxidation of emodinanthrone to emodin. Emodin O-methyltransferase encoded probably by gedA then catalyzes methylation of the 8-hydroxy group of emodin to form questin. Ring cleavage of questin by questin oxidase gedK leads to desmethylsulochrin via several intermediates including questin epoxide. Another methylation step probably catalyzed by methyltransferase gedG leads to the formation of sulochrin which is further converted to dihydrogeodin by the sulochrin halogenase gedL. Finally, the dihydrogeodin oxidase gedJ catalyzes the stereospecific phenol oxidative coupling reaction converting dihydrogeodin to geodin. The protein is Methyltransferase gedG of Aspergillus terreus (strain NIH 2624 / FGSC A1156).